A 115-amino-acid chain; its full sequence is Phosphoribosyl-ATP pyrophosphatase (115 aa).

The protein belongs to the PRA-PH family.

It is found in the cytoplasm. It carries out the reaction 1-(5-phospho-beta-D-ribosyl)-ATP + H2O = 1-(5-phospho-beta-D-ribosyl)-5'-AMP + diphosphate + H(+). It participates in amino-acid biosynthesis; L-histidine biosynthesis; L-histidine from 5-phospho-alpha-D-ribose 1-diphosphate: step 2/9. The chain is Phosphoribosyl-ATP pyrophosphatase from Bordetella bronchiseptica (strain ATCC BAA-588 / NCTC 13252 / RB50) (Alcaligenes bronchisepticus).